The following is a 232-amino-acid chain: MQDQQIINPISQSQIPQELSENVILSSVSDLYDWARLSSLWPLMYGTACCFIEIAAMIGSRFDFDRFGLVPRSSPRQADLIITAGTVTMKMAPALVRLYEQMPDPKYVIAMGACTITGGMFSSDSTTAVRGVDKLIPVDVYLPGCPPRPEAVMDAIVKLRKKIANEDVRERGNLMQTHRYYSTTHQMKVVPPIHTGVYLEAAARKSPAAALGAGVGEDMTPALVAEAEKEEA.

4 residues coordinate [4Fe-4S] cluster: cysteine 49, cysteine 50, cysteine 114, and cysteine 145.

It belongs to the complex I 20 kDa subunit family. NDH-1 can be composed of about 15 different subunits; different subcomplexes with different compositions have been identified which probably have different functions. [4Fe-4S] cluster is required as a cofactor.

Its subcellular location is the cellular thylakoid membrane. The catalysed reaction is a plastoquinone + NADH + (n+1) H(+)(in) = a plastoquinol + NAD(+) + n H(+)(out). The enzyme catalyses a plastoquinone + NADPH + (n+1) H(+)(in) = a plastoquinol + NADP(+) + n H(+)(out). NDH-1 shuttles electrons from an unknown electron donor, via FMN and iron-sulfur (Fe-S) centers, to quinones in the respiratory and/or the photosynthetic chain. The immediate electron acceptor for the enzyme in this species is believed to be plastoquinone. Couples the redox reaction to proton translocation, and thus conserves the redox energy in a proton gradient. Cyanobacterial NDH-1 also plays a role in inorganic carbon-concentration. The polypeptide is NAD(P)H-quinone oxidoreductase subunit K 1 (Acaryochloris marina (strain MBIC 11017)).